The chain runs to 90 residues: Small ribosomal subunit protein uS17 (90 aa).

Belongs to the universal ribosomal protein uS17 family. As to quaternary structure, part of the 30S ribosomal subunit.

Functionally, one of the primary rRNA binding proteins, it binds specifically to the 5'-end of 16S ribosomal RNA. In Burkholderia ambifaria (strain ATCC BAA-244 / DSM 16087 / CCUG 44356 / LMG 19182 / AMMD) (Burkholderia cepacia (strain AMMD)), this protein is Small ribosomal subunit protein uS17.